We begin with the raw amino-acid sequence, 132 residues long: Agouti-signaling protein (132 aa).

Positions 1–22 (MDVTRLLLATLLVFLCFFTADS) are cleaved as a signal peptide. The N-linked (GlcNAc...) asparagine glycan is linked to Asn-39. The tract at residues 62–85 (ISRKEAEKKRSSKKEASMKTVARP) is disordered. A compositionally biased stretch (basic and acidic residues) spans 63-78 (SRKEAEKKRSSKKEAS). 5 disulfide bridges follow: Cys-93-Cys-108, Cys-100-Cys-114, Cys-107-Cys-125, Cys-111-Cys-132, and Cys-116-Cys-123. An Agouti domain is found at 93-132 (CVATRNSCKPPAPACCDPCASCQCRFFRSACSCRVLSLNC).

The protein resides in the secreted. In terms of biological role, involved in the regulation of melanogenesis. The binding of ASP to MC1R precludes alpha-MSH initiated signaling and thus blocks production of cAMP, leading to a down-regulation of eumelanogenesis (brown/black pigment) and thus increasing synthesis of pheomelanin (yellow/red pigment). In Pongo pygmaeus (Bornean orangutan), this protein is Agouti-signaling protein (ASIP).